Consider the following 65-residue polypeptide: Bucain (65 aa).

4 disulfides stabilise this stretch: Cys-3–Cys-24, Cys-17–Cys-42, Cys-46–Cys-57, and Cys-58–Cys-63.

This sequence belongs to the three-finger toxin family. Short-chain subfamily. Orphan group III sub-subfamily. Expressed by the venom gland.

It is found in the secreted. The chain is Bucain from Bungarus candidus (Malayan krait).